A 240-amino-acid chain; its full sequence is UDP-2,3-diacylglucosamine hydrolase (240 aa).

The Mn(2+) site is built by Asp-8, His-10, Asp-41, Asn-79, and His-114. A substrate-binding site is contributed by 79-80 (NR). Asp-122, Ser-160, Asn-164, Lys-167, and His-195 together coordinate substrate. 2 residues coordinate Mn(2+): His-195 and His-197.

This sequence belongs to the LpxH family. Requires Mn(2+) as cofactor.

It is found in the cell inner membrane. The catalysed reaction is UDP-2-N,3-O-bis[(3R)-3-hydroxytetradecanoyl]-alpha-D-glucosamine + H2O = 2-N,3-O-bis[(3R)-3-hydroxytetradecanoyl]-alpha-D-glucosaminyl 1-phosphate + UMP + 2 H(+). It functions in the pathway glycolipid biosynthesis; lipid IV(A) biosynthesis; lipid IV(A) from (3R)-3-hydroxytetradecanoyl-[acyl-carrier-protein] and UDP-N-acetyl-alpha-D-glucosamine: step 4/6. In terms of biological role, hydrolyzes the pyrophosphate bond of UDP-2,3-diacylglucosamine to yield 2,3-diacylglucosamine 1-phosphate (lipid X) and UMP by catalyzing the attack of water at the alpha-P atom. Involved in the biosynthesis of lipid A, a phosphorylated glycolipid that anchors the lipopolysaccharide to the outer membrane of the cell. The sequence is that of UDP-2,3-diacylglucosamine hydrolase from Escherichia coli O7:K1 (strain IAI39 / ExPEC).